An 86-amino-acid chain; its full sequence is 4-hydroxyphenylacetate decarboxylase small subunit (86 aa).

Residues H3, C6, C19, C36, C45, C48, C62, and C80 each contribute to the [4Fe-4S] cluster site.

The protein belongs to the HPA decarboxylase small subunit family. As to quaternary structure, heterooctamer consisting of 4 large (HpdB) subunits and 4 small (HpdC) subunits, arranged as a tetramer of heterodimers. [4Fe-4S] cluster is required as a cofactor.

It catalyses the reaction 4-hydroxyphenylacetate + H(+) = 4-methylphenol + CO2. It carries out the reaction 3,4-dihydroxyphenylacetate + H(+) = 4-methylcatechol + CO2. Functionally, component of the HPA decarboxylase that decarboxylates phenylacetates with a hydroxyl group in the p-position. Active toward 4-hydroxyphenylacetate and 3,4-dihydroxyphenylacetate, forming 4-methylphenol and 4-methylcatechol, respectively. Is likely involved in the catabolism of aromatic amino acids such as tyrosine fermentation. 4-methylphenol (p-cresol) formation provides metabolic toxicity, which allows an active suppression of other microbes and may provide growth advantages for the producers in highly competitive environments. The small subunit is essential for enzymatic activity of HPA decarboxylase, and also seems to be involved in the regulation of the enzyme oligomeric state and catalytic activity. This is 4-hydroxyphenylacetate decarboxylase small subunit from Clostridium scatologenes.